The primary structure comprises 423 residues: Serine hydroxymethyltransferase (423 aa).

(6S)-5,6,7,8-tetrahydrofolate-binding positions include L126 and 130–132 (GHL). Position 235 is an N6-(pyridoxal phosphate)lysine (K235).

This sequence belongs to the SHMT family. As to quaternary structure, homodimer. The cofactor is pyridoxal 5'-phosphate.

It is found in the cytoplasm. The catalysed reaction is (6R)-5,10-methylene-5,6,7,8-tetrahydrofolate + glycine + H2O = (6S)-5,6,7,8-tetrahydrofolate + L-serine. It participates in one-carbon metabolism; tetrahydrofolate interconversion. It functions in the pathway amino-acid biosynthesis; glycine biosynthesis; glycine from L-serine: step 1/1. In terms of biological role, catalyzes the reversible interconversion of serine and glycine with tetrahydrofolate (THF) serving as the one-carbon carrier. This reaction serves as the major source of one-carbon groups required for the biosynthesis of purines, thymidylate, methionine, and other important biomolecules. Also exhibits THF-independent aldolase activity toward beta-hydroxyamino acids, producing glycine and aldehydes, via a retro-aldol mechanism. This chain is Serine hydroxymethyltransferase, found in Sorangium cellulosum (strain So ce56) (Polyangium cellulosum (strain So ce56)).